The chain runs to 440 residues: Putative short-chain fatty acid transporter (440 aa).

Residues 1–19 are Periplasmic-facing; the sequence is MIGRISRFMTRFVSRWLPD. A helical membrane pass occupies residues 20–40; sequence PLIFAMLLTLLTFVIALWLTP. The Cytoplasmic portion of the chain corresponds to 41-53; it reads QTPISMVKMWGDG. A helical transmembrane segment spans residues 54-74; that stretch reads FWNLLAFGMQMALIIVTGHAL. The Periplasmic portion of the chain corresponds to 75–102; the sequence is ASSAPVKSLLRTAASAAKTPVQGVMLVT. Residues 103–123 form a helical membrane-spanning segment; it reads FFGSVACVINWGFGLVVGAMF. Over 124–137 the chain is Cytoplasmic; that stretch reads AREVARRVPGSDYP. The next 2 helical transmembrane spans lie at 138–158 and 159–179; these read LLIA…SGSM and PLLA…IPVG. A topological domain (cytoplasmic) is located at residue aspartate 180. The helical transmembrane segment at 181-201 threads the bilayer; sequence TLFSGFNIFITVALIVVMPFI. Residues 202–244 are Periplasmic-facing; the sequence is TRMMMPKPSDVVSIDPKLLMEEADFQKQLPKDAPPSERLEESR. A run of 2 helical transmembrane segments spans residues 245–265 and 266–286; these read ILTL…FSEH and GFNI…LLLH. At 287-313 the chain is on the periplasmic side; sequence KTPMAYMRAISAAARSTAGILVQFPFY. The helical transmembrane segment at 314-334 threads the bilayer; that stretch reads AGIQLMMEHSGLGGLITEFFI. The Cytoplasmic segment spans residues 335 to 351; sequence NVANKDTFPVMTFFSSA. The helical transmembrane segment at 352–372 threads the bilayer; sequence LINFAVPSGGGHWVIQGPFVI. At 373-394 the chain is on the periplasmic side; it reads PAAQALGADLGKSVMAIAYGEQ. The chain crosses the membrane as a helical span at residues 395–415; it reads WMNMAQPFWALPALAIAGLGV. Residues 416–419 lie on the Cytoplasmic side of the membrane; the sequence is RDIM. Residues 420 to 440 traverse the membrane as a helical segment; it reads GYCITALLFSGVIFVIGLTLF.

Its subcellular location is the cell inner membrane. In terms of biological role, may be responsible for the uptake of short-chain fatty acids. This is Putative short-chain fatty acid transporter (atoE) from Escherichia coli (strain K12).